The following is a 193-amino-acid chain: ATP synthase subunit b 2 (193 aa).

The helical transmembrane segment at 44–64 (IFWLVLTLLAIYFVLTKIALP) threads the bilayer.

Belongs to the ATPase B chain family. As to quaternary structure, F-type ATPases have 2 components, F(1) - the catalytic core - and F(0) - the membrane proton channel. F(1) has five subunits: alpha(3), beta(3), gamma(1), delta(1), epsilon(1). F(0) has three main subunits: a(1), b(2) and c(10-14). The alpha and beta chains form an alternating ring which encloses part of the gamma chain. F(1) is attached to F(0) by a central stalk formed by the gamma and epsilon chains, while a peripheral stalk is formed by the delta and b chains.

It localises to the cell inner membrane. In terms of biological role, f(1)F(0) ATP synthase produces ATP from ADP in the presence of a proton or sodium gradient. F-type ATPases consist of two structural domains, F(1) containing the extramembraneous catalytic core and F(0) containing the membrane proton channel, linked together by a central stalk and a peripheral stalk. During catalysis, ATP synthesis in the catalytic domain of F(1) is coupled via a rotary mechanism of the central stalk subunits to proton translocation. Component of the F(0) channel, it forms part of the peripheral stalk, linking F(1) to F(0). The b'-subunit is a diverged and duplicated form of b found in plants and photosynthetic bacteria. This is ATP synthase subunit b 2 (atpF2) from Jannaschia sp. (strain CCS1).